We begin with the raw amino-acid sequence, 1115 residues long: Rho GTPase-activating protein gacW (1115 aa).

A disordered region spans residues 661 to 691; it reads PPIGPPSTPTKSSNPGFQTLPKRPTRGPLYP. The 182-residue stretch at 699 to 880 folds into the Rho-GAP domain; that stretch reads VTLTDKAQIN…FMIVNYFDIF (182 aa). 2 disordered regions span residues 888-1065 and 1092-1115; these read SSDN…GDGK and ESRT…GPSL. Residues 898-929 show a composition bias toward low complexity; that stretch reads DSTQSTCTTNNNNLVATSLSSPISPSTTPTKS. Composition is skewed to polar residues over residues 934–943 and 959–990; these read LHTTVEVSRS and RPIS…SRPS. Residues 1013–1046 are compositionally biased toward low complexity; sequence SNHSSSGQLNNNNSNNNTTSNSSNSSSGKSSSNP.

The protein resides in the cytoplasm. In terms of biological role, rho GTPase-activating protein involved in the signal transduction pathway. This Dictyostelium discoideum (Social amoeba) protein is Rho GTPase-activating protein gacW (gacW).